The primary structure comprises 366 residues: Beta-1,3-glucan-binding protein (366 aa).

The first 17 residues, methionine 1 to alanine 17, serve as a signal peptide directing secretion. The GH16 domain maps to alanine 18–threonine 364. A glycan (N-linked (GlcNAc...) asparagine) is linked at asparagine 66.

It belongs to the glycosyl hydrolase 16 family. Constitutively expressed in hemocytes.

It localises to the secreted. Functionally, binds to beta-1,3-glucan. May play a role in recognition of microorganisms and in activation of the prophenoloxidase cascade. The sequence is that of Beta-1,3-glucan-binding protein from Penaeus monodon (Giant tiger prawn).